The sequence spans 1966 residues: MWIPTEHEKYGVVIASFRGTVPYGLSLEIGDTVQILEKCDGWYRGFALKNPNIKGIFPSSYVHLKNACVKNKGQFEMVIPTEDSVITEMTSTLRDWGTMWKQLYVRNEGDLFHRLWHIMNEILDLRRQVLVGHLTHDRMKDVKRHITARLDWGNEQLGLDLVPRKEYAMVDPEDISITELYRLMEHRHRKKDTPVQASSHHLFVQMKSLMCSNLGEELEVIFSLFDSKENRPISERFFLRLNRNGLPKAPDKPERHCSLFVDLGSSELRKDIYITVHIIRIGRMGAGEKKNACSVQYRRPFGCAVLSIADLLTGETKDDLILKVYMCNTESEWYQIHENIIKKLNARYNLTGSNAGLAVSLQLLHGDIEQIRREYSSVFSHGVSITRKLGFSNIIMPGEMRNDLYITIERGEFEKGGKSVARNVEVTMFIVDSSGQTLKDFISFGSGEPPASEYHSFVLYHNNSPRWSELLKLPIPVDKFRGAHIRFEFRHCSTKEKGEKKLFGFSFVPLMQEDGRTLPDGTHELIVHKCEENTNLQDTTRYLKLPFSKGIFLGNNNQAMKATKESFCITSFLCSTKLTQNGDMLDLLKWRTHPDKITGCLSKLKEIDGSEIVKFLQDTLDTLFGILDENSQKYGSKVFDSLVHIINLLQDSKFHHFKPVMDTYIESHFAGALAYRDLIKVLKWYVDRITEAERQEHIQEVLKAQEYIFKYIVQSRRLFSLATGGQNEEEFRCCIQELLMSVRFFLSQESKGSGALSQSQAVFLSSFPAVYSELLKLFDVREVANLVQDTLGSLPTILHVDDSLQAIKLQCIGKTVESQLYTNPDSRYILLPVVLHHLHIHLQEQKDLIMCARILSNVFCLIKKNSSEKSVLEEIDVIVASLLDILLRTILEITSRPQPSSSAMRFQFQDVTGEFVACLLSLLRQMTDRHYQQLLDSFNTKEELRDFLLQIFTVFRILIRPEMFPKDWTVMRLVANNVIITTVLYLSDALRKNFLNENFDYKIWDSYFYLAVIFINQLCLQLEMFTPSKKKKVLEKYGDMRVTMGCEIFSMWQNLGEHKLHFIPALIGPFLEVTLIPQPDLRNVMIPIFHDMMDWEQRRSGNFKQVEAKLIDKLDSLMSEGKGDETYRELFNSILLKKIERETWRESGVSLIATVTRLMERLLDYRDCMKMGEVDGKKIGCTVSLLNFYKTELNKEEMYIRYIHKLYDLHLKAQNFTEAAYTLLLYDELLEWSDRPLREFLTYPMQTEWQRKEHLHLTIIQNFDRGKCWENGIILCRKIAEQYESYYDYRNLSKMRMMEASLYDKIMDQQRLEPEFFRVGFYGKKFPFFLRNKEFVCRGHDYERLEAFQQRMLNEFPHAIAMQHANQPDETIFQAEAQYLQIYAVTPIPESQEVLQREGVPDNIKSFYKVNHIWKFRYDRPFHKGTKDKENEFKSLWVERTSLYLVQSLPGISRWFEVEKREVVEMSPLENAIEVLENKNQQLKTLISQCQTRQMQNINPLTMCLNGVIDAAVNGGVSRYQEAFFVKEYILSHPEDGEKIARLRELMLEQAQILEFGLAVHEKFVPQDMRPLHKKLVDQFFVMKSSLGIQEFSACMQASPVHFPNGSPRVCRNSAPASVSPDGTRVIPRRSPLSYPAVNRYSSSSLSSQASAEVSNITGQSESSDEVFNMQPSPSTSSLSSTHSASPNVTSSAPSSARASPLLSDKHKHSRENSCLSPRERPCSAIYPTPVEPSQRMLFNHIGDGALPRSDPNLSAPEKAVNPTPSSWSLDSGKEAKNMSDSGKLISPPVPPRPTQTASPARHTTSVSPSPAGRSPLKGSVQSFTPSPVEYHSPGLISNSPVLSGSYSSGISSLSRCSTSETSGFENQVNEQSAPLPVPVPVPVPSYGGEEPVRKESKTPPPYSVYERTLRRPVPLPHSLSIPVTSEPPALPPKPLAARSSHLENGARRTDPGPRPRPLPRKVSQL.

The region spanning 6 to 67 (EHEKYGVVIA…PSSYVHLKNA (62 aa)) is the SH3 domain. Tyrosine 167 is modified (phosphotyrosine). Threonine 193 is subject to Phosphothreonine. The C2 DOCK-type domain occupies 401–574 (RNDLYITIER…ESFCITSFLC (174 aa)). The DOCKER domain occupies 1190–1596 (KTELNKEEMY…LGIQEFSACM (407 aa)). Serine 1599, serine 1607, serine 1614, serine 1618, serine 1620, and serine 1631 each carry phosphoserine. Disordered regions lie at residues 1648 to 1729 (SQAS…IYPT) and 1742 to 1966 (IGDG…VSQL). Low complexity predominate over residues 1672 to 1703 (PSPSTSSLSSTHSASPNVTSSAPSSARASPLL). The residue at position 1769 (serine 1769) is a Phosphoserine. Residues 1788 to 1794 (PPVPPRP) carry the SH3-binding motif. A compositionally biased stretch (polar residues) spans 1795–1809 (TQTASPARHTTSVSP). Residues 1838-1863 (SNSPVLSGSYSSGISSLSRCSTSETS) are compositionally biased toward low complexity. Positions 1864-1873 (GFENQVNEQS) are enriched in polar residues. The segment covering 1941-1954 (SHLENGARRTDPGP) has biased composition (basic and acidic residues).

This sequence belongs to the DOCK family. As to quaternary structure, interacts with nucleotide-free Rap1; functions as a guanine nucleotide exchange factor (GEF) for Rap1. Interacts (via DOCKER domain) with RAC1; functions as a guanine nucleotide exchange factor (GEF) for RAC1. Interacts with the SH3 domain of CRK. Interacts with FASLG. Interacts with ELMO2 and EPHA2; mediates activation of RAC1 by EPHA2. Interacts with USH1C (via PDZ 1 domain). In terms of tissue distribution, widely expressed at low level. Highly expressed in skeletal muscle, prostate and ovary. May be specifically expressed in the brain and eye.

The protein localises to the cell membrane. It localises to the cell projection. The protein resides in the cytoplasm. Its subcellular location is the cytosol. Its function is as follows. Functions as a guanine nucleotide exchange factor (GEF) that promotes the exchange of GDP to GTP, converting inactive GDP-bound small GTPases into their active GTP-bound form. Involved in regulation of adherens junction between cells. Plays a role in cell migration. Functionally, has a higher guanine nucleotide exchange factor activity compared to other isoforms. This Homo sapiens (Human) protein is Dedicator of cytokinesis protein 4 (DOCK4).